Reading from the N-terminus, the 247-residue chain is Uridylate kinase (247 aa).

Lys-16–Gly-19 provides a ligand contact to ATP. Gly-58 contacts UMP. ATP is bound by residues Gly-59 and Arg-63. Residues Asp-78 and Thr-139–Thr-146 each bind UMP. ATP-binding residues include Thr-166, Tyr-172, and Asp-175.

The protein belongs to the UMP kinase family. In terms of assembly, homohexamer.

Its subcellular location is the cytoplasm. The enzyme catalyses UMP + ATP = UDP + ADP. It functions in the pathway pyrimidine metabolism; CTP biosynthesis via de novo pathway; UDP from UMP (UMPK route): step 1/1. With respect to regulation, inhibited by UTP. Catalyzes the reversible phosphorylation of UMP to UDP. This is Uridylate kinase from Xylella fastidiosa (strain Temecula1 / ATCC 700964).